Here is a 290-residue protein sequence, read N- to C-terminus: ATP synthase gamma chain (290 aa).

This sequence belongs to the ATPase gamma chain family. F-type ATPases have 2 components, CF(1) - the catalytic core - and CF(0) - the membrane proton channel. CF(1) has five subunits: alpha(3), beta(3), gamma(1), delta(1), epsilon(1). CF(0) has three main subunits: a, b and c.

The protein resides in the cell membrane. Produces ATP from ADP in the presence of a proton gradient across the membrane. The gamma chain is believed to be important in regulating ATPase activity and the flow of protons through the CF(0) complex. This is ATP synthase gamma chain from Rubrobacter xylanophilus (strain DSM 9941 / JCM 11954 / NBRC 16129 / PRD-1).